A 311-amino-acid polypeptide reads, in one-letter code: Methionyl-tRNA formyltransferase (311 aa).

109–112 (SLLP) contributes to the (6S)-5,6,7,8-tetrahydrofolate binding site.

Belongs to the Fmt family.

The enzyme catalyses L-methionyl-tRNA(fMet) + (6R)-10-formyltetrahydrofolate = N-formyl-L-methionyl-tRNA(fMet) + (6S)-5,6,7,8-tetrahydrofolate + H(+). In terms of biological role, attaches a formyl group to the free amino group of methionyl-tRNA(fMet). The formyl group appears to play a dual role in the initiator identity of N-formylmethionyl-tRNA by promoting its recognition by IF2 and preventing the misappropriation of this tRNA by the elongation apparatus. This Moorella thermoacetica (strain ATCC 39073 / JCM 9320) protein is Methionyl-tRNA formyltransferase.